Consider the following 32-residue polypeptide: MSDIN-like toxin proprotein 1 (32 aa).

Residues 1-10 (MSDINATRLP) constitute a propeptide that is removed on maturation. The segment at residues 11–18 (IFWFIYFP) is a cross-link (cyclopeptide (Ile-Pro)). Positions 19 to 32 (CVSDVDSTLTRGER) are excised as a propeptide.

It belongs to the MSDIN fungal toxin family. In terms of processing, processed by the macrocyclase-peptidase enzyme POPB to yield a toxic cyclic octapeptide. POPB first removes 10 residues from the N-terminus. Conformational trapping of the remaining peptide forces the enzyme to release this intermediate rather than proceed to macrocyclization. The enzyme rebinds the remaining peptide in a different conformation and catalyzes macrocyclization of the N-terminal 8 residues. In terms of tissue distribution, expressed in basidiocarps.

In terms of biological role, probable toxin that belongs to the MSDIN-like toxin family responsible for a large number of food poisoning cases and deaths. The sequence is that of MSDIN-like toxin proprotein 1 from Amanita exitialis (Guangzhou destroying angel).